The primary structure comprises 380 residues: Zinc metalloproteinase-like protein nas-21 (380 aa).

An N-terminal signal peptide occupies residues 1-24; the sequence is MNYFITFFFMHIAVLNFYFRFSNG. One can recognise a Peptidase M12A domain in the interval 46-234; the sequence is QALRMDNEPR…LMINEYYQCS (189 aa). Asn-87 carries N-linked (GlcNAc...) asparagine glycosylation. 2 disulfides stabilise this stretch: Cys-90–Cys-233 and Cys-110–Cys-130. The active site involves Glu-138. Asn-253, Asn-269, Asn-283, and Asn-304 each carry an N-linked (GlcNAc...) asparagine glycan.

It localises to the secreted. In terms of biological role, may lack metalloprotease activity. The chain is Zinc metalloproteinase-like protein nas-21 (nas-21) from Caenorhabditis elegans.